The following is a 558-amino-acid chain: Formate--tetrahydrofolate ligase 2 (558 aa).

67 to 74 (TPAGEGKT) serves as a coordination point for ATP.

The protein belongs to the formate--tetrahydrofolate ligase family.

The enzyme catalyses (6S)-5,6,7,8-tetrahydrofolate + formate + ATP = (6R)-10-formyltetrahydrofolate + ADP + phosphate. The protein operates within one-carbon metabolism; tetrahydrofolate interconversion. This Desulfitobacterium hafniense (strain Y51) protein is Formate--tetrahydrofolate ligase 2.